The sequence spans 371 residues: Putative glutamate--cysteine ligase 2 (371 aa).

Belongs to the glutamate--cysteine ligase type 2 family. YbdK subfamily.

The catalysed reaction is L-cysteine + L-glutamate + ATP = gamma-L-glutamyl-L-cysteine + ADP + phosphate + H(+). Its function is as follows. ATP-dependent carboxylate-amine ligase which exhibits weak glutamate--cysteine ligase activity. The polypeptide is Putative glutamate--cysteine ligase 2 (Burkholderia thailandensis (strain ATCC 700388 / DSM 13276 / CCUG 48851 / CIP 106301 / E264)).